The sequence spans 197 residues: Auxin-responsive protein IAA31 (197 aa).

Disordered stretches follow at residues 1-43 (MENL…DQAK) and 66-90 (SCLQ…ETQQ). The short motif at 9–13 (LRLGL) is the EAR-like (transcriptional repression) element. Residues 99–186 (GLFVKVSMDG…TCKRLRIMKG (88 aa)) enclose the PB1 domain.

Belongs to the Aux/IAA family. As to quaternary structure, homodimers and heterodimers. As to expression, highly expressed in etiolated seedlings. Expressed in roots.

Its subcellular location is the nucleus. Its function is as follows. Aux/IAA proteins are short-lived transcriptional factors that function as repressors of early auxin response genes at low auxin concentrations. This chain is Auxin-responsive protein IAA31 (IAA31), found in Oryza sativa subsp. japonica (Rice).